A 223-amino-acid polypeptide reads, in one-letter code: Thymidylate kinase (223 aa).

ATP is bound at residue 7–14 (GIDGAGKS).

The protein belongs to the thymidylate kinase family.

It carries out the reaction dTMP + ATP = dTDP + ADP. In terms of biological role, phosphorylation of dTMP to form dTDP in both de novo and salvage pathways of dTTP synthesis. The protein is Thymidylate kinase of Prosthecochloris aestuarii (strain DSM 271 / SK 413).